A 408-amino-acid chain; its full sequence is CinA-like protein (408 aa).

This sequence belongs to the CinA family.

The chain is CinA-like protein from Fervidobacterium nodosum (strain ATCC 35602 / DSM 5306 / Rt17-B1).